The following is a 136-amino-acid chain: S-protein homolog 6 (136 aa).

The first 17 residues, 1–17 (MFIIIFIVLISLIGCET), serve as a signal peptide directing secretion. 2 N-linked (GlcNAc...) asparagine glycosylation sites follow: N76 and N108.

Belongs to the plant self-incompatibility (S1) protein family.

The protein resides in the secreted. This is S-protein homolog 6 from Arabidopsis thaliana (Mouse-ear cress).